Reading from the N-terminus, the 131-residue chain is Translation initiation factor 5A (131 aa).

Residue K37 is modified to Hypusine.

This sequence belongs to the eIF-5A family.

The protein resides in the cytoplasm. Functions by promoting the formation of the first peptide bond. The chain is Translation initiation factor 5A (eIF5A) from Methanococcus maripaludis (strain C7 / ATCC BAA-1331).